Reading from the N-terminus, the 341-residue chain is Phosphoribosylformylglycinamidine cyclo-ligase (341 aa).

It belongs to the AIR synthase family.

It is found in the cytoplasm. The enzyme catalyses 2-formamido-N(1)-(5-O-phospho-beta-D-ribosyl)acetamidine + ATP = 5-amino-1-(5-phospho-beta-D-ribosyl)imidazole + ADP + phosphate + H(+). Its pathway is purine metabolism; IMP biosynthesis via de novo pathway; 5-amino-1-(5-phospho-D-ribosyl)imidazole from N(2)-formyl-N(1)-(5-phospho-D-ribosyl)glycinamide: step 2/2. The chain is Phosphoribosylformylglycinamidine cyclo-ligase from Picosynechococcus sp. (strain ATCC 27264 / PCC 7002 / PR-6) (Agmenellum quadruplicatum).